The sequence spans 705 residues: Glycine--tRNA ligase beta subunit (705 aa).

This sequence belongs to the class-II aminoacyl-tRNA synthetase family. Tetramer of two alpha and two beta subunits.

It localises to the cytoplasm. It carries out the reaction tRNA(Gly) + glycine + ATP = glycyl-tRNA(Gly) + AMP + diphosphate. The protein is Glycine--tRNA ligase beta subunit of Persephonella marina (strain DSM 14350 / EX-H1).